Consider the following 463-residue polypeptide: L-seryl-tRNA(Sec) selenium transferase (463 aa).

At lysine 295 the chain carries N6-(pyridoxal phosphate)lysine.

The protein belongs to the SelA family. Homodecamer; pentamer of dimers. Binds only one seryl-tRNA(Sec) per dimer. Pyridoxal 5'-phosphate is required as a cofactor.

The protein resides in the cytoplasm. The catalysed reaction is L-seryl-tRNA(Sec) + selenophosphate + H(+) = L-selenocysteinyl-tRNA(Sec) + phosphate. Its pathway is aminoacyl-tRNA biosynthesis; selenocysteinyl-tRNA(Sec) biosynthesis; selenocysteinyl-tRNA(Sec) from L-seryl-tRNA(Sec) (bacterial route): step 1/1. Functionally, converts seryl-tRNA(Sec) to selenocysteinyl-tRNA(Sec) required for selenoprotein biosynthesis. In Escherichia fergusonii (strain ATCC 35469 / DSM 13698 / CCUG 18766 / IAM 14443 / JCM 21226 / LMG 7866 / NBRC 102419 / NCTC 12128 / CDC 0568-73), this protein is L-seryl-tRNA(Sec) selenium transferase.